Reading from the N-terminus, the 446-residue chain is Methionine aminopeptidase 2-3 (446 aa).

Positions 14 to 116 (ITDAGANGAD…ENRYRTTSEE (103 aa)) are disordered. Residues 61-76 (AKKKKNKKRKPKKKQP) are compositionally biased toward basic residues. The segment covering 86–96 (PLSQLFPNNSY) has biased composition (polar residues). Positions 98-116 (KGEEVEYKDENRYRTTSEE) are enriched in basic and acidic residues. His199 is a substrate binding site. Asp219, Asp230, and His299 together coordinate a divalent metal cation. Position 307 (His307) interacts with substrate. The a divalent metal cation site is built by Glu332 and Glu427.

It belongs to the peptidase M24A family. Methionine aminopeptidase eukaryotic type 2 subfamily. Requires Co(2+) as cofactor. The cofactor is Zn(2+). It depends on Mn(2+) as a cofactor. Fe(2+) serves as cofactor.

The protein localises to the cytoplasm. The enzyme catalyses Release of N-terminal amino acids, preferentially methionine, from peptides and arylamides.. Its function is as follows. Cotranslationally removes the N-terminal methionine from nascent proteins. The N-terminal methionine is often cleaved when the second residue in the primary sequence is small and uncharged (Met-Ala-, Cys, Gly, Pro, Ser, Thr, or Val). The chain is Methionine aminopeptidase 2-3 from Aspergillus fumigatus (strain CBS 144.89 / FGSC A1163 / CEA10) (Neosartorya fumigata).